Here is a 1035-residue protein sequence, read N- to C-terminus: Retinoblastoma-related protein (1035 aa).

A disordered region spans residues 403-426; that stretch reads ITSPLSPHRSPASHANGIPGSANS. The tract at residues 431 to 632 is domain A; the sequence is TPVSTAMTTA…EKGSSLYNSL (202 aa). The pocket stretch occupies residues 431-885; the sequence is TPVSTAMTTA…NEIFIPAAKP (455 aa). Residues 633-753 form a spacer region; it reads TVARPALSAE…PGGGGETCAE (121 aa). Disordered regions lie at residues 674–697 and 721–748; these read PSLQKHETSPGSGQNGDLRSPKRP and GNLKSKLPPPPLQSAFASPTRPNPGGGG. The tract at residues 754 to 885 is domain B; the sequence is TGINVFFTKI…NEIFIPAAKP (132 aa).

The protein belongs to the retinoblastoma protein (RB) family.

Its subcellular location is the nucleus. Functionally, regulator of biological processes that recruits a histone deacetylase to control gene transcription. May play a role in the entry into mitosis, negatively regulating the cell proliferation. Formation of stable complexes with geminiviridae replication-associated proteins may create a cellular environment which favors viral DNA replication. In Populus trichocarpa (Western balsam poplar), this protein is Retinoblastoma-related protein (RBL901).